Reading from the N-terminus, the 1374-residue chain is DNA-directed RNA polymerase subunit beta' (1374 aa).

The segment at 1-47 (MTSTSPKSRKPSTKTTKSKSKSKSKSKAAKAAAAGASPALARTPPQF) is disordered. Basic residues predominate over residues 7-28 (KSRKPSTKTTKSKSKSKSKSKA). Residues 29–39 (AKAAAAGASPA) show a composition bias toward low complexity. Residues C258, C325, C332, and C335 each coordinate Zn(2+). The disordered stretch occupies residues 1344–1374 (RPTGENELEEEQLPDPSALEGLQQEGLLTEE). Low complexity predominate over residues 1362-1374 (LEGLQQEGLLTEE).

Belongs to the RNA polymerase beta' chain family. RpoC2 subfamily. In terms of assembly, in cyanobacteria the RNAP catalytic core is composed of 2 alpha, 1 beta, 1 beta', 1 gamma and 1 omega subunit. When a sigma factor is associated with the core the holoenzyme is formed, which can initiate transcription. Zn(2+) serves as cofactor.

The enzyme catalyses RNA(n) + a ribonucleoside 5'-triphosphate = RNA(n+1) + diphosphate. DNA-dependent RNA polymerase catalyzes the transcription of DNA into RNA using the four ribonucleoside triphosphates as substrates. This chain is DNA-directed RNA polymerase subunit beta', found in Prochlorococcus marinus (strain MIT 9313).